Here is a 358-residue protein sequence, read N- to C-terminus: Phosphoribosylformylglycinamidine cyclo-ligase (358 aa).

It belongs to the AIR synthase family.

The protein localises to the cytoplasm. The catalysed reaction is 2-formamido-N(1)-(5-O-phospho-beta-D-ribosyl)acetamidine + ATP = 5-amino-1-(5-phospho-beta-D-ribosyl)imidazole + ADP + phosphate + H(+). Its pathway is purine metabolism; IMP biosynthesis via de novo pathway; 5-amino-1-(5-phospho-D-ribosyl)imidazole from N(2)-formyl-N(1)-(5-phospho-D-ribosyl)glycinamide: step 2/2. This is Phosphoribosylformylglycinamidine cyclo-ligase from Chromohalobacter salexigens (strain ATCC BAA-138 / DSM 3043 / CIP 106854 / NCIMB 13768 / 1H11).